An 878-amino-acid chain; its full sequence is Leucine--tRNA ligase (878 aa).

The 'HIGH' region motif lies at 43–53 (PYPSGRIHMGH). A 'KMSKS' region motif is present at residues 630–634 (KMSKS). Position 633 (Lys-633) interacts with ATP.

The protein belongs to the class-I aminoacyl-tRNA synthetase family.

The protein resides in the cytoplasm. It carries out the reaction tRNA(Leu) + L-leucine + ATP = L-leucyl-tRNA(Leu) + AMP + diphosphate. The sequence is that of Leucine--tRNA ligase from Rhodopseudomonas palustris (strain BisB5).